The following is a 278-amino-acid chain: Orotidine 5'-phosphate decarboxylase (278 aa).

Residues D40, 62 to 64, 93 to 102, Y223, and R242 each bind substrate; these read KTH and DRKFADIGNT. The Proton donor role is filled by K95.

It belongs to the OMP decarboxylase family.

The catalysed reaction is orotidine 5'-phosphate + H(+) = UMP + CO2. The protein operates within pyrimidine metabolism; UMP biosynthesis via de novo pathway; UMP from orotate: step 2/2. The protein is Orotidine 5'-phosphate decarboxylase (URA1) of Schizophyllum commune (Split gill fungus).